We begin with the raw amino-acid sequence, 753 residues long: 5-methyltetrahydropteroyltriglutamate--homocysteine methyltransferase (753 aa).

5-methyltetrahydropteroyltri-L-glutamate contacts are provided by residues 17 to 20 (RELK) and lysine 117. L-homocysteine-binding positions include 431 to 433 (IGS) and glutamate 484. L-methionine is bound by residues 431 to 433 (IGS) and glutamate 484. 5-methyltetrahydropteroyltri-L-glutamate contacts are provided by residues 515–516 (RC) and tryptophan 561. Aspartate 599 serves as a coordination point for L-homocysteine. Aspartate 599 is an L-methionine binding site. Glutamate 605 serves as a coordination point for 5-methyltetrahydropteroyltri-L-glutamate. Zn(2+)-binding residues include histidine 641, cysteine 643, and glutamate 665. Histidine 694 acts as the Proton donor in catalysis. Residue cysteine 726 participates in Zn(2+) binding.

It belongs to the vitamin-B12 independent methionine synthase family. Zn(2+) serves as cofactor.

The catalysed reaction is 5-methyltetrahydropteroyltri-L-glutamate + L-homocysteine = tetrahydropteroyltri-L-glutamate + L-methionine. The protein operates within amino-acid biosynthesis; L-methionine biosynthesis via de novo pathway; L-methionine from L-homocysteine (MetE route): step 1/1. In terms of biological role, catalyzes the transfer of a methyl group from 5-methyltetrahydrofolate to homocysteine resulting in methionine formation. The protein is 5-methyltetrahydropteroyltriglutamate--homocysteine methyltransferase of Escherichia coli O9:H4 (strain HS).